Reading from the N-terminus, the 466-residue chain is Ribulose bisphosphate carboxylase large chain (466 aa).

Residue lysine 5 is modified to N6,N6,N6-trimethyllysine. Substrate is bound by residues asparagine 114 and threonine 164. Lysine 166 (proton acceptor) is an active-site residue. Lysine 168 provides a ligand contact to substrate. Positions 192, 194, and 195 each coordinate Mg(2+). Lysine 192 carries the N6-carboxylysine modification. Histidine 285 acts as the Proton acceptor in catalysis. Substrate is bound by residues arginine 286, histidine 318, and serine 370.

This sequence belongs to the RuBisCO large chain family. Type I subfamily. As to quaternary structure, heterohexadecamer of 8 large chains and 8 small chains; disulfide-linked. The disulfide link is formed within the large subunit homodimers. It depends on Mg(2+) as a cofactor. Post-translationally, the disulfide bond which can form in the large chain dimeric partners within the hexadecamer appears to be associated with oxidative stress and protein turnover.

The protein localises to the plastid. Its subcellular location is the chloroplast. The enzyme catalyses 2 (2R)-3-phosphoglycerate + 2 H(+) = D-ribulose 1,5-bisphosphate + CO2 + H2O. The catalysed reaction is D-ribulose 1,5-bisphosphate + O2 = 2-phosphoglycolate + (2R)-3-phosphoglycerate + 2 H(+). Functionally, ruBisCO catalyzes two reactions: the carboxylation of D-ribulose 1,5-bisphosphate, the primary event in carbon dioxide fixation, as well as the oxidative fragmentation of the pentose substrate in the photorespiration process. Both reactions occur simultaneously and in competition at the same active site. This chain is Ribulose bisphosphate carboxylase large chain, found in Bixa orellana (Lipstick tree).